The chain runs to 340 residues: Anthranilate phosphoribosyltransferase (340 aa).

Residues Gly83, 86–87, Thr91, 93–96, 111–119, and Ser123 each bind 5-phospho-alpha-D-ribose 1-diphosphate; these read GD, NIST, and KHGNRSITS. Gly83 lines the anthranilate pocket. Ser95 is a Mg(2+) binding site. Asn114 serves as a coordination point for anthranilate. Arg169 provides a ligand contact to anthranilate. The Mg(2+) site is built by Asp228 and Glu229.

Belongs to the anthranilate phosphoribosyltransferase family. Homodimer. Mg(2+) is required as a cofactor.

It carries out the reaction N-(5-phospho-beta-D-ribosyl)anthranilate + diphosphate = 5-phospho-alpha-D-ribose 1-diphosphate + anthranilate. The protein operates within amino-acid biosynthesis; L-tryptophan biosynthesis; L-tryptophan from chorismate: step 2/5. Its function is as follows. Catalyzes the transfer of the phosphoribosyl group of 5-phosphorylribose-1-pyrophosphate (PRPP) to anthranilate to yield N-(5'-phosphoribosyl)-anthranilate (PRA). The sequence is that of Anthranilate phosphoribosyltransferase from Solibacter usitatus (strain Ellin6076).